Reading from the N-terminus, the 344-residue chain is Tetraacyldisaccharide 4'-kinase (344 aa).

An ATP-binding site is contributed by 65–72; that stretch reads HAGGTGKT.

It belongs to the LpxK family.

The enzyme catalyses a lipid A disaccharide + ATP = a lipid IVA + ADP + H(+). The protein operates within glycolipid biosynthesis; lipid IV(A) biosynthesis; lipid IV(A) from (3R)-3-hydroxytetradecanoyl-[acyl-carrier-protein] and UDP-N-acetyl-alpha-D-glucosamine: step 6/6. In terms of biological role, transfers the gamma-phosphate of ATP to the 4'-position of a tetraacyldisaccharide 1-phosphate intermediate (termed DS-1-P) to form tetraacyldisaccharide 1,4'-bis-phosphate (lipid IVA). This is Tetraacyldisaccharide 4'-kinase from Neisseria meningitidis serogroup C / serotype 2a (strain ATCC 700532 / DSM 15464 / FAM18).